The sequence spans 307 residues: Elongation factor Ts (307 aa).

The interval 79–82 is involved in Mg(2+) ion dislocation from EF-Tu; sequence TDFV.

This sequence belongs to the EF-Ts family.

It is found in the cytoplasm. Functionally, associates with the EF-Tu.GDP complex and induces the exchange of GDP to GTP. It remains bound to the aminoacyl-tRNA.EF-Tu.GTP complex up to the GTP hydrolysis stage on the ribosome. This Rhizobium meliloti (strain 1021) (Ensifer meliloti) protein is Elongation factor Ts.